We begin with the raw amino-acid sequence, 342 residues long: Organic solute transporter alpha-like protein 2 (342 aa).

Topologically, residues 1 to 50 are extracellular; sequence MLEISPWETLVKLLTDSLLNCTGTHEDVPHAKTFLRSLTTTYIASLAVAT. Asn-20 carries N-linked (GlcNAc...) asparagine glycosylation. A helical membrane pass occupies residues 51-71; sequence AVTVGTVCLAVLHLIYIHFYI. Over 72 to 79 the chain is Cytoplasmic; that stretch reads THSSRRLH. The chain crosses the membrane as a helical span at residues 80-100; that stretch reads IVLLACTAPLVSLLALVAMYM. At 101–109 the chain is on the extracellular side; that stretch reads PRVWFLSHL. Residues 110–130 traverse the membrane as a helical segment; sequence LSFLYFSFALWVIICLLLHIF. The Cytoplasmic segment spans residues 131–176; the sequence is DGHHALVTKMMQRLQYVEIATPPFCCLFPCLPKVRLEGKKIRWCEL. A helical transmembrane segment spans residues 177-197; the sequence is MVMQAPIVRLFATLVSLVIYF. The Extracellular portion of the chain corresponds to 198–208; the sequence is EYQDQGLVPLK. Residues 209 to 229 traverse the membrane as a helical segment; that stretch reads VLDFITLPSLLAGIYGTHILV. Over 230 to 243 the chain is Cytoplasmic; that stretch reads TTVSRMDELISYRY. Residues 244–264 form a helical membrane-spanning segment; sequence VVVFRLLDFFFMVFGLQQPVF. Residues 265 to 290 are Extracellular-facing; sequence DFLARYGAFGCGTVLPAIETSFYWKN. A helical transmembrane segment spans residues 291 to 311; that stretch reads FFTVIEAFCVTLISTVLLQPS. Residues 312–342 are Cytoplasmic-facing; sequence KSSFFDKHPSCRSMSSARSTITDVDTDESTT.

It belongs to the OST-alpha family.

The protein resides in the cell membrane. Functionally, probable transporter. The polypeptide is Organic solute transporter alpha-like protein 2 (osta-2) (Caenorhabditis elegans).